A 336-amino-acid polypeptide reads, in one-letter code: Putative bifunctional cytochrome c-type biogenesis protein CcmAE (336 aa).

A cytochrome c biogenesis ATP-binding export protein CcmA 2 region spans residues 1–199; it reads MLEARDLYCE…ADTVRRLALT (199 aa). The 241-residue stretch at 2–242 folds into the ABC transporter domain; the sequence is LEARDLYCER…VGQRLRVGGM (241 aa). 34–41 contributes to the ATP binding site; it reads GGNGAGKT. The cytochrome c-type biogenesis protein CcmE 2 stretch occupies residues 196–336; sequence LALTTALVLY…PQRVDKDTSS (141 aa). Residues His307 and Tyr311 each coordinate heme. A disordered region spans residues 307 to 336; that stretch reads HDENYTPPEVEKAMQENHRRPQRVDKDTSS.

The protein in the N-terminal section; belongs to the ABC transporter superfamily. CcmA exporter (TC 3.A.1.107) family. It in the C-terminal section; belongs to the CcmE/CycJ family.

Its subcellular location is the cell inner membrane. It carries out the reaction heme b(in) + ATP + H2O = heme b(out) + ADP + phosphate + H(+). Part of the ABC transporter complex CcmAB involved in the biogenesis of c-type cytochromes; once thought to export heme, this seems not to be the case, but its exact role is uncertain. Responsible for energy coupling to the transport system. Its function is as follows. Heme chaperone required for the biogenesis of c-type cytochromes. Transiently binds heme delivered by CcmC and transfers the heme to apo-cytochromes in a process facilitated by CcmF and CcmH. This chain is Putative bifunctional cytochrome c-type biogenesis protein CcmAE (ccmAE), found in Salmonella choleraesuis (strain SC-B67).